We begin with the raw amino-acid sequence, 1440 residues long: Glucose transporter type 1 (1440 aa).

Residues M1 to G23 form the signal peptide. The Cytoplasmic segment spans residues M24–S67. A helical transmembrane segment spans residues V68–A88. The Extracellular portion of the chain corresponds to N89 to G95. The chain crosses the membrane as a helical span at residues G96–V116. Topologically, residues S117 to R127 are cytoplasmic. Residues F128 to I148 form a helical membrane-spanning segment. Residues A149–Q162 are Extracellular-facing. D-glucose is bound at residue Q162. A helical membrane pass occupies residues L163–T183. The Cytoplasmic portion of the chain corresponds to N184–G186. The helical transmembrane segment at W187–V207 threads the bilayer. At C208–P272 the chain is on the extracellular side. A helical membrane pass occupies residues L273–Y293. Residues Q283–Q284 and N289 contribute to the D-glucose site. Topologically, residues Y294 to K310 are cytoplasmic. Residues F311–M331 form a helical membrane-spanning segment. Topologically, residues D332–L339 are extracellular. A helical membrane pass occupies residues H340 to I360. At K361 to V372 the chain is on the cytoplasmic side. A helical membrane pass occupies residues V373–I393. Residue W391 coordinates D-glucose. The Extracellular segment spans residues T394 to S405. The helical transmembrane segment at A406 to P426 threads the bilayer. At S427 to K429 the chain is on the cytoplasmic side. A helical membrane pass occupies residues T430–F450. At T451 to N534 the chain is on the extracellular side. N-linked (GlcNAc...) asparagine glycans are attached at residues N460 and N480. Residues L535 to G555 form a helical membrane-spanning segment. At S556–K1440 the chain is on the cytoplasmic side. Disordered stretches follow at residues E628–A708, Q725–M808, A966–P987, F1000–H1083, L1304–H1330, and A1380–V1401. Over residues P669 to T678 the composition is skewed to polar residues. The segment covering Q686–Q704 has biased composition (low complexity). Pro residues predominate over residues Q730–P739. The segment covering C754 to R789 has biased composition (basic residues). Residues S1313 to H1330 show a composition bias toward low complexity.

This sequence belongs to the major facilitator superfamily. Sugar transporter (TC 2.A.1.1) family. Glucose transporter subfamily.

The protein localises to the membrane. Facilitative glucose transporter. This Drosophila melanogaster (Fruit fly) protein is Glucose transporter type 1 (Glut1).